We begin with the raw amino-acid sequence, 490 residues long: GTPase Der (490 aa).

EngA-type G domains are found at residues 3-166 and 203-376; these read PVVA…MDDV and IKLA…DSST. GTP contacts are provided by residues 9–16, 56–60, 118–121, 209–216, 256–260, and 321–324; these read GRPNVGKS, DTGGI, NKTD, DTAGV, and NKWD. Residues 377–461 form the KH-like domain; the sequence is RRVSTAMLTR…PIRIQFKEGE (85 aa).

This sequence belongs to the TRAFAC class TrmE-Era-EngA-EngB-Septin-like GTPase superfamily. EngA (Der) GTPase family. Associates with the 50S ribosomal subunit.

Functionally, GTPase that plays an essential role in the late steps of ribosome biogenesis. The chain is GTPase Der from Salmonella typhi.